Consider the following 685-residue polypeptide: Protein snwA (685 aa).

Disordered stretches follow at residues 1 to 62 (MTSL…GYLP), 88 to 112 (RKGKSKSSNSNTSNMNGGGTTTSIV), 347 to 573 (LAED…DSIY), and 605 to 685 (AVSN…SKKR). Low complexity-rich tracts occupy residues 30-41 (PQQQKQQQQQQQ) and 93-102 (KSSNSNTSNM). An SNW region spans residues 194–360 (ATYIKYTPSN…VRNERSGIIQ (167 aa)). Residues 370–381 (DSDNDNDNDSSS) show a composition bias toward acidic residues. Basic and acidic residues predominate over residues 399 to 494 (RSTERIPSRN…DRYSKRRSDS (96 aa)). Acidic residues predominate over residues 495 to 507 (DSDSDSDSSDSED). Basic and acidic residues predominate over residues 508 to 556 (ERVRRERKEKLERDKIRMEKKRELEREYRLEASGKKSKFNRDQDRDISE). A compositionally biased stretch (polar residues) spans 618 to 631 (EDNTSIQDVLSNSR). A compositionally biased stretch (basic and acidic residues) spans 646-685 (PNKEFSGTDRSKDRTGPVAFEKEKKKSDDPFGFDDFSKKR).

The protein belongs to the SNW family. In terms of assembly, interacts with cypE.

The protein localises to the nucleus. The sequence is that of Protein snwA (snwA) from Dictyostelium discoideum (Social amoeba).